The following is a 96-amino-acid chain: Pollen allergen Dac g 3 (96 aa).

Residues 14–94 (KKLVLDIKYT…AFKIGTTYTP (81 aa)) enclose the Expansin-like CBD domain.

This sequence belongs to the expansin family. Expansin B subfamily.

The protein localises to the secreted. This is Pollen allergen Dac g 3 from Dactylis glomerata (Orchard grass).